The following is a 447-amino-acid chain: Na(+)-translocating NADH-quinone reductase subunit A (447 aa).

It belongs to the NqrA family. Composed of six subunits; NqrA, NqrB, NqrC, NqrD, NqrE and NqrF.

It carries out the reaction a ubiquinone + n Na(+)(in) + NADH + H(+) = a ubiquinol + n Na(+)(out) + NAD(+). NQR complex catalyzes the reduction of ubiquinone-1 to ubiquinol by two successive reactions, coupled with the transport of Na(+) ions from the cytoplasm to the periplasm. NqrA to NqrE are probably involved in the second step, the conversion of ubisemiquinone to ubiquinol. The protein is Na(+)-translocating NADH-quinone reductase subunit A of Neisseria meningitidis serogroup C / serotype 2a (strain ATCC 700532 / DSM 15464 / FAM18).